A 550-amino-acid chain; its full sequence is Methionine--tRNA ligase (550 aa).

Positions 13 to 23 (PYANGPLHFGH) match the 'HIGH' region motif. Cysteine 145, cysteine 148, cysteine 158, and cysteine 161 together coordinate Zn(2+). The 'KMSKS' region signature appears at 331–335 (QFSKS). Residue lysine 334 participates in ATP binding.

Belongs to the class-I aminoacyl-tRNA synthetase family. MetG type 1 subfamily. Monomer. Zn(2+) serves as cofactor.

The protein localises to the cytoplasm. It carries out the reaction tRNA(Met) + L-methionine + ATP = L-methionyl-tRNA(Met) + AMP + diphosphate. In terms of biological role, is required not only for elongation of protein synthesis but also for the initiation of all mRNA translation through initiator tRNA(fMet) aminoacylation. This Chlamydia trachomatis serovar L2b (strain UCH-1/proctitis) protein is Methionine--tRNA ligase.